Reading from the N-terminus, the 106-residue chain is Toxin-like structure LSTX-D8 (106 aa).

The signal sequence occupies residues 1 to 20 (MTKVLVVVALLVTLISYSSS). The propeptide occupies 21-41 (EGIDDLEADELLSLMANEQTR). 4 disulfides stabilise this stretch: C45–C60, C52–C69, C59–C85, and C71–C83.

The protein belongs to the neurotoxin 19 (CSTX) family. 02 (D7) subfamily. Expressed by the venom gland.

The protein localises to the secreted. This is Toxin-like structure LSTX-D8 from Lycosa singoriensis (Wolf spider).